A 274-amino-acid polypeptide reads, in one-letter code: Proliferating cell nuclear antigen 1 (274 aa).

A DNA-binding region spans residues 61–80 (RCDRERVLGVNIASLNKVFK).

Belongs to the PCNA family. As to quaternary structure, homotrimer. Interacts with ORC1 (via PIP-box motif); the interaction occurs during DNA replication in trophozoites. Interacts with ORC5; the interaction occurs during the trophozoite stage but not at the late schizont stage. Interacts with FEN1.

Its subcellular location is the nucleus. The protein localises to the chromosome. The protein resides in the cytoplasm. Auxiliary protein of DNA polymerase delta and is involved in the control of DNA replication by increasing the polymerase processibility during elongation of the leading strand. Involved in DNA damage response. This Plasmodium falciparum (isolate 3D7) protein is Proliferating cell nuclear antigen 1.